The sequence spans 57 residues: Large ribosomal subunit protein bL32 (57 aa).

The disordered stretch occupies residues 1-23 (MAVPKKKTSKSKRDKRRATWRHK).

This sequence belongs to the bacterial ribosomal protein bL32 family.

The sequence is that of Large ribosomal subunit protein bL32 from Trichormus variabilis (strain ATCC 29413 / PCC 7937) (Anabaena variabilis).